A 68-amino-acid polypeptide reads, in one-letter code: Large ribosomal subunit protein bL35 (68 aa).

This sequence belongs to the bacterial ribosomal protein bL35 family.

The polypeptide is Large ribosomal subunit protein bL35 (Fusobacterium nucleatum subsp. nucleatum (strain ATCC 25586 / DSM 15643 / BCRC 10681 / CIP 101130 / JCM 8532 / KCTC 2640 / LMG 13131 / VPI 4355)).